The sequence spans 493 residues: Glycerol kinase (493 aa).

An ADP-binding site is contributed by T11. ATP contacts are provided by T11, T12, and S13. T11 serves as a coordination point for sn-glycerol 3-phosphate. R15 provides a ligand contact to ADP. Residues R80, E81, Y132, and D241 each coordinate sn-glycerol 3-phosphate. 5 residues coordinate glycerol: R80, E81, Y132, D241, and Q242. ADP-binding residues include T263 and G306. ATP contacts are provided by T263, G306, Q310, and G408. G408 provides a ligand contact to ADP.

The protein belongs to the FGGY kinase family.

The catalysed reaction is glycerol + ATP = sn-glycerol 3-phosphate + ADP + H(+). It participates in polyol metabolism; glycerol degradation via glycerol kinase pathway; sn-glycerol 3-phosphate from glycerol: step 1/1. With respect to regulation, inhibited by fructose 1,6-bisphosphate (FBP). Functionally, key enzyme in the regulation of glycerol uptake and metabolism. Catalyzes the phosphorylation of glycerol to yield sn-glycerol 3-phosphate. The sequence is that of Glycerol kinase from Cereibacter sphaeroides (strain ATCC 17029 / ATH 2.4.9) (Rhodobacter sphaeroides).